Consider the following 1150-residue polypeptide: Cohesin subunit SCC3 (1150 aa).

Residues 1-12 (MTAVRRSTRIRT) show a composition bias toward basic residues. The segment at 1–122 (MTAVRRSTRI…PAYHRSKKDQ (122 aa)) is disordered. Residue Ser-28 is modified to Phosphoserine. The segment covering 32–43 (VESDKITAKTQH) has biased composition (basic and acidic residues). The segment covering 44–72 (EEEEEQDTGESEESSSEDDYEDQDDDDYV) has biased composition (acidic residues). Residues 77-87 (AKRKSRKRKPK) are compositionally biased toward basic residues. Residues 305–349 (LTQQAVNLEKNYLAKLSKQLSLEEKKKRPNNKTLEKLESTIAETQ) are a coiled coil. An SCD domain is found at 367–457 (FVHRYKDVSD…ERFKTKILEV (91 aa)). Ser-628 carries the post-translational modification Phosphoserine. A disordered region spans residues 1065–1150 (ENPEPNKKNI…IDNSDEITQD (86 aa)). Basic and acidic residues predominate over residues 1083-1101 (QREKAPLQPNSERETDHAN).

The protein belongs to the SCC3 family. Interacts directly with MCD1 in cohesin complex. Cohesin complexes are composed of the SMC1 and SMC3 heterodimer attached via their hinge domain, MCD1 which link them, and IRR1/SCC3, which interacts with MCD1. The cohesin complex also interacts with SCC2, which is required for its association with chromosomes. Interacts with LIN1. Post-translationally, acetylated by ECO1.

The protein localises to the nucleus. It localises to the chromosome. Its subcellular location is the centromere. Functionally, component of cohesin complex, a complex required for the cohesion of sister chromatids after DNA replication. The cohesin complex apparently forms a large proteinaceous ring within which sister chromatids can be trapped. At anaphase, the MCD1/SCC1 subunit of the complex is cleaved and dissociates from chromatin, allowing sister chromatids to segregate. The cohesin complex may also play a role in spindle pole assembly during mitosis. The protein is Cohesin subunit SCC3 (IRR1) of Saccharomyces cerevisiae (strain ATCC 204508 / S288c) (Baker's yeast).